Here is a 185-residue protein sequence, read N- to C-terminus: Ribosome-recycling factor (185 aa).

It belongs to the RRF family.

The protein resides in the cytoplasm. In terms of biological role, responsible for the release of ribosomes from messenger RNA at the termination of protein biosynthesis. May increase the efficiency of translation by recycling ribosomes from one round of translation to another. In Streptococcus sanguinis (strain SK36), this protein is Ribosome-recycling factor.